The following is a 239-amino-acid chain: Ribosomal RNA small subunit methyltransferase G (239 aa).

Residues Gly79, Phe84, 130–131, and Arg149 contribute to the S-adenosyl-L-methionine site; that span reads AE.

Belongs to the methyltransferase superfamily. RNA methyltransferase RsmG family.

The protein resides in the cytoplasm. Its function is as follows. Specifically methylates the N7 position of a guanine in 16S rRNA. This is Ribosomal RNA small subunit methyltransferase G from Lactobacillus delbrueckii subsp. bulgaricus (strain ATCC 11842 / DSM 20081 / BCRC 10696 / JCM 1002 / NBRC 13953 / NCIMB 11778 / NCTC 12712 / WDCM 00102 / Lb 14).